The primary structure comprises 601 residues: Elongation factor 4 (601 aa).

In terms of domain architecture, tr-type G spans 6–188 (SHIRNFSIIA…QIVHRVPAPE (183 aa)). GTP-binding positions include 18–23 (DHGKST) and 135–138 (NKID).

It belongs to the TRAFAC class translation factor GTPase superfamily. Classic translation factor GTPase family. LepA subfamily.

The protein resides in the cell inner membrane. It carries out the reaction GTP + H2O = GDP + phosphate + H(+). Functionally, required for accurate and efficient protein synthesis under certain stress conditions. May act as a fidelity factor of the translation reaction, by catalyzing a one-codon backward translocation of tRNAs on improperly translocated ribosomes. Back-translocation proceeds from a post-translocation (POST) complex to a pre-translocation (PRE) complex, thus giving elongation factor G a second chance to translocate the tRNAs correctly. Binds to ribosomes in a GTP-dependent manner. The sequence is that of Elongation factor 4 from Anaeromyxobacter dehalogenans (strain 2CP-1 / ATCC BAA-258).